A 393-amino-acid chain; its full sequence is Phospho-N-acetylmuramoyl-pentapeptide-transferase (393 aa).

10 helical membrane passes run 29 to 49 (RAVM…PIVI), 75 to 95 (TPTM…LLWF), 101 to 121 (FVWI…VDDW), 138 to 158 (YFWQ…SVSE), 193 to 213 (SISY…VIVG), 226 to 246 (GLAI…AYAT), 263 to 283 (AGEL…FLWF), 290 to 310 (VFMG…IAVI), 315 to 335 (VVLA…MAQV), and 370 to 390 (QVVV…LSSL).

Belongs to the glycosyltransferase 4 family. MraY subfamily. Mg(2+) serves as cofactor.

Its subcellular location is the cell inner membrane. It catalyses the reaction UDP-N-acetyl-alpha-D-muramoyl-L-alanyl-gamma-D-glutamyl-meso-2,6-diaminopimeloyl-D-alanyl-D-alanine + di-trans,octa-cis-undecaprenyl phosphate = di-trans,octa-cis-undecaprenyl diphospho-N-acetyl-alpha-D-muramoyl-L-alanyl-D-glutamyl-meso-2,6-diaminopimeloyl-D-alanyl-D-alanine + UMP. It participates in cell wall biogenesis; peptidoglycan biosynthesis. Functionally, catalyzes the initial step of the lipid cycle reactions in the biosynthesis of the cell wall peptidoglycan: transfers peptidoglycan precursor phospho-MurNAc-pentapeptide from UDP-MurNAc-pentapeptide onto the lipid carrier undecaprenyl phosphate, yielding undecaprenyl-pyrophosphoryl-MurNAc-pentapeptide, known as lipid I. The chain is Phospho-N-acetylmuramoyl-pentapeptide-transferase from Methylibium petroleiphilum (strain ATCC BAA-1232 / LMG 22953 / PM1).